Here is a 251-residue protein sequence, read N- to C-terminus: Imidazole glycerol phosphate synthase subunit HisF (251 aa).

Catalysis depends on residues Asp11 and Asp130.

It belongs to the HisA/HisF family. Heterodimer of HisH and HisF.

The protein localises to the cytoplasm. It catalyses the reaction 5-[(5-phospho-1-deoxy-D-ribulos-1-ylimino)methylamino]-1-(5-phospho-beta-D-ribosyl)imidazole-4-carboxamide + L-glutamine = D-erythro-1-(imidazol-4-yl)glycerol 3-phosphate + 5-amino-1-(5-phospho-beta-D-ribosyl)imidazole-4-carboxamide + L-glutamate + H(+). The protein operates within amino-acid biosynthesis; L-histidine biosynthesis; L-histidine from 5-phospho-alpha-D-ribose 1-diphosphate: step 5/9. Its function is as follows. IGPS catalyzes the conversion of PRFAR and glutamine to IGP, AICAR and glutamate. The HisF subunit catalyzes the cyclization activity that produces IGP and AICAR from PRFAR using the ammonia provided by the HisH subunit. The protein is Imidazole glycerol phosphate synthase subunit HisF of Flavobacterium johnsoniae (strain ATCC 17061 / DSM 2064 / JCM 8514 / BCRC 14874 / CCUG 350202 / NBRC 14942 / NCIMB 11054 / UW101) (Cytophaga johnsonae).